A 248-amino-acid polypeptide reads, in one-letter code: MDKVVATAAEAVADIANGSSLAVGGFGLCGIPEALIAALVDSGVTDLETVSNNCGIDGVGLGLLLQHKRIRRTVSSYVGENKEFARQFLAGELEVELTPQGTLAERLRAGGMGIPAFYTPAGVGTQVADGGLPWRYDASGGVAVVSPAKETREFDGVTYVLERGIRTDFALVHAWQGDRHGNLMYRHAAANFNPECASAGRITIAEVEHLVEPGEIDPATVHTPGVFVHRVVHVPNPAKKIERETVRQ.

24 to 30 (GGFGLCG) lines the CoA pocket.

This sequence belongs to the 3-oxoacid CoA-transferase subunit A family. As to quaternary structure, heterodimer of a subunit A and a subunit B.

It catalyses the reaction a 3-oxo acid + succinyl-CoA = a 3-oxoacyl-CoA + succinate. The sequence is that of Probable succinyl-CoA:3-ketoacid coenzyme A transferase subunit A (scoA) from Mycobacterium bovis (strain ATCC BAA-935 / AF2122/97).